We begin with the raw amino-acid sequence, 394 residues long: Elongation factor Tu (394 aa).

Positions 10–204 (KPHVNVGTIG…ALDSYIPEPE (195 aa)) constitute a tr-type G domain. The tract at residues 19–26 (GHVDHGKT) is G1. 19–26 (GHVDHGKT) serves as a coordination point for GTP. Residue T26 coordinates Mg(2+). The segment at 60–64 (GITIN) is G2. The interval 81-84 (DCPG) is G3. Residues 81–85 (DCPGH) and 136–139 (NKCD) contribute to the GTP site. The interval 136–139 (NKCD) is G4. Residues 174 to 176 (SAL) form a G5 region.

The protein belongs to the TRAFAC class translation factor GTPase superfamily. Classic translation factor GTPase family. EF-Tu/EF-1A subfamily. Monomer.

It localises to the cytoplasm. The catalysed reaction is GTP + H2O = GDP + phosphate + H(+). Its function is as follows. GTP hydrolase that promotes the GTP-dependent binding of aminoacyl-tRNA to the A-site of ribosomes during protein biosynthesis. In Shewanella sp. (strain ANA-3), this protein is Elongation factor Tu.